The sequence spans 174 residues: Shikimate kinase 2 (174 aa).

12–17 serves as a coordination point for ATP; sequence GAGKTT. 2 residues coordinate Mg(2+): T16 and D32. Substrate contacts are provided by D34, R58, and G79. The interval 112–126 is LID domain; the sequence is AEDPEEAQRPSLTGK. ATP is bound at residue R120. R139 lines the substrate pocket. Q155 serves as a coordination point for ATP.

This sequence belongs to the shikimate kinase family. AroL subfamily. As to quaternary structure, monomer. Mg(2+) serves as cofactor.

Its subcellular location is the cytoplasm. The catalysed reaction is shikimate + ATP = 3-phosphoshikimate + ADP + H(+). It participates in metabolic intermediate biosynthesis; chorismate biosynthesis; chorismate from D-erythrose 4-phosphate and phosphoenolpyruvate: step 5/7. Catalyzes the specific phosphorylation of the 3-hydroxyl group of shikimic acid using ATP as a cosubstrate. This Yersinia pseudotuberculosis serotype IB (strain PB1/+) protein is Shikimate kinase 2.